A 234-amino-acid polypeptide reads, in one-letter code: Segregation and condensation protein A (234 aa).

This sequence belongs to the ScpA family. In terms of assembly, component of a cohesin-like complex composed of ScpA, ScpB and the Smc homodimer, in which ScpA and ScpB bind to the head domain of Smc. The presence of the three proteins is required for the association of the complex with DNA.

The protein localises to the cytoplasm. Functionally, participates in chromosomal partition during cell division. May act via the formation of a condensin-like complex containing Smc and ScpB that pull DNA away from mid-cell into both cell halves. In Streptococcus pyogenes serotype M18 (strain MGAS8232), this protein is Segregation and condensation protein A.